A 711-amino-acid chain; its full sequence is Polyribonucleotide nucleotidyltransferase (711 aa).

Residues aspartate 486 and aspartate 492 each contribute to the Mg(2+) site. Residues 553-612 (PRIHTIKINPDKIKDVIGKGGSVIRALTEETGTTIEIEDDGTVKIAATDGEKAKHAIRRI) form the KH domain. The S1 motif domain occupies 622–690 (GRVYNGKVTR…RQGRIRLSIK (69 aa)). The interval 690–711 (KEATEQSQPAAALEAPAAEQGE) is disordered. Residues 698 to 711 (PAAALEAPAAEQGE) are compositionally biased toward low complexity.

The protein belongs to the polyribonucleotide nucleotidyltransferase family. In terms of assembly, component of the RNA degradosome, which is a multiprotein complex involved in RNA processing and mRNA degradation. The cofactor is Mg(2+).

The protein localises to the cytoplasm. The catalysed reaction is RNA(n+1) + phosphate = RNA(n) + a ribonucleoside 5'-diphosphate. Functionally, involved in mRNA degradation. Catalyzes the phosphorolysis of single-stranded polyribonucleotides processively in the 3'- to 5'-direction. This is Polyribonucleotide nucleotidyltransferase from Escherichia coli O127:H6 (strain E2348/69 / EPEC).